The primary structure comprises 274 residues: 2,3,4,5-tetrahydropyridine-2,6-dicarboxylate N-succinyltransferase (274 aa).

Residues arginine 103 and aspartate 140 each contribute to the substrate site.

This sequence belongs to the transferase hexapeptide repeat family. As to quaternary structure, homotrimer.

It localises to the cytoplasm. It catalyses the reaction (S)-2,3,4,5-tetrahydrodipicolinate + succinyl-CoA + H2O = (S)-2-succinylamino-6-oxoheptanedioate + CoA. Its pathway is amino-acid biosynthesis; L-lysine biosynthesis via DAP pathway; LL-2,6-diaminopimelate from (S)-tetrahydrodipicolinate (succinylase route): step 1/3. The polypeptide is 2,3,4,5-tetrahydropyridine-2,6-dicarboxylate N-succinyltransferase (Haemophilus ducreyi (strain 35000HP / ATCC 700724)).